The chain runs to 470 residues: UDP-N-acetylmuramoylalanine--D-glutamate ligase (470 aa).

121–127 (GTNGKST) is a binding site for ATP.

It belongs to the MurCDEF family.

It localises to the cytoplasm. The catalysed reaction is UDP-N-acetyl-alpha-D-muramoyl-L-alanine + D-glutamate + ATP = UDP-N-acetyl-alpha-D-muramoyl-L-alanyl-D-glutamate + ADP + phosphate + H(+). The protein operates within cell wall biogenesis; peptidoglycan biosynthesis. Functionally, cell wall formation. Catalyzes the addition of glutamate to the nucleotide precursor UDP-N-acetylmuramoyl-L-alanine (UMA). The polypeptide is UDP-N-acetylmuramoylalanine--D-glutamate ligase (Rhizobium johnstonii (strain DSM 114642 / LMG 32736 / 3841) (Rhizobium leguminosarum bv. viciae)).